A 131-amino-acid polypeptide reads, in one-letter code: D-ribose pyranase (131 aa).

Histidine 20 (proton donor) is an active-site residue. Residues aspartate 28, histidine 98, and 120–122 (YAN) each bind substrate.

This sequence belongs to the RbsD / FucU family. RbsD subfamily. As to quaternary structure, homodecamer.

The protein localises to the cytoplasm. It catalyses the reaction beta-D-ribopyranose = beta-D-ribofuranose. It participates in carbohydrate metabolism; D-ribose degradation; D-ribose 5-phosphate from beta-D-ribopyranose: step 1/2. Its function is as follows. Catalyzes the interconversion of beta-pyran and beta-furan forms of D-ribose. The chain is D-ribose pyranase from Bacillus cereus (strain 03BB102).